Here is a 463-residue protein sequence, read N- to C-terminus: Chaperone SurA (463 aa).

The N-terminal stretch at 1–25 is a signal peptide; the sequence is MTKPFSVLLASLLVITSTVSPLASA. PpiC domains are found at residues 174-276 and 289-388; these read GSQY…KLVE and LTEY…QRVG. Disordered regions lie at residues 329–348 and 434–463; these read ATAK…GDLG and GDRA…QPTR. Residues 440-452 show a composition bias toward low complexity; the sequence is DATAAPEPAAAPA. Over residues 453-463 the composition is skewed to pro residues; sequence APTPPPAQPTR.

The protein resides in the periplasm. It carries out the reaction [protein]-peptidylproline (omega=180) = [protein]-peptidylproline (omega=0). In terms of biological role, chaperone involved in the correct folding and assembly of outer membrane proteins. Recognizes specific patterns of aromatic residues and the orientation of their side chains, which are found more frequently in integral outer membrane proteins. May act in both early periplasmic and late outer membrane-associated steps of protein maturation. This chain is Chaperone SurA, found in Xanthomonas campestris pv. campestris (strain 8004).